The sequence spans 392 residues: tRNA (guanine-N(7)-)-methyltransferase (392 aa).

Residues E123, E148, and D175 each coordinate S-adenosyl-L-methionine. Residues K201 and D231 each coordinate substrate.

Belongs to the class I-like SAM-binding methyltransferase superfamily. TrmB family.

The enzyme catalyses guanosine(46) in tRNA + S-adenosyl-L-methionine = N(7)-methylguanosine(46) in tRNA + S-adenosyl-L-homocysteine. It functions in the pathway tRNA modification; N(7)-methylguanine-tRNA biosynthesis. In terms of biological role, catalyzes the formation of N(7)-methylguanine at position 46 (m7G46) in tRNA. The polypeptide is tRNA (guanine-N(7)-)-methyltransferase (Campylobacter jejuni subsp. jejuni serotype O:6 (strain 81116 / NCTC 11828)).